The following is a 399-amino-acid chain: MRGTIYVAIAILVAASSRSSAESDQVEPQQAPNSDFVTSDDTIYEVLPTRILRESRGSNDKLAVGAGDEERMMNNLSNGNSLSESLEQTTIKLTTDDVIAKAEEAIKNFKQLEPVLNMIRRKRQRIDPTPSNLGGQALHAPPNPDKSLVSVTENAPNVIANRLEKSGPTVIMKNAVRSITQHDYRPAPSGSSTTSAAATDIRLHEQPIARKGSELFKNIYPNKMVSNSVEHPLHMLEGNENSAHTVTVNGITYLMAQGPALGRKDTVNEEAKKIHEAFLKAFSLPFHQYPEETTHMLRLLRWSYNSSPNNINTATSLKDLANSQDPDVIMNLLDMDLKKLLGDGRSAVKATEKNLKEAYSVKLLIMYELFYDFCHGNRKLVGNLPSKSDRVDSILKVTT.

The first 21 residues, 1 to 21 (MRGTIYVAIAILVAASSRSSA), serve as a signal peptide directing secretion. The short motif at 50–71 (RILRESRGSNDKLAVGAGDEER) is the RxLR-dEER element. An N-linked (GlcNAc...) asparagine glycan is attached at asparagine 75. The segment at 126–145 (IDPTPSNLGGQALHAPPNPD) is disordered.

Belongs to the RxLR effector family.

Its subcellular location is the secreted. The protein resides in the host nucleus. Functionally, secreted effector that completely suppresses the host cell death induced by cell death-inducing proteins. The polypeptide is Secreted RxLR effector protein 36 (Plasmopara viticola (Downy mildew of grapevine)).